The sequence spans 126 residues: Autophagy-related protein 8-like protein DDB_G0290491 (126 aa).

G123 carries the Phosphatidylethanolamine amidated glycine lipid modification. A propeptide spans 124 to 126 (SDI) (removed in mature form).

Belongs to the ATG8 family.

Its subcellular location is the membrane. In Dictyostelium discoideum (Social amoeba), this protein is Autophagy-related protein 8-like protein DDB_G0290491.